The sequence spans 376 residues: Chaperone protein DnaJ (376 aa).

The region spanning 4 to 68 (DYYQLLGVAR…ETRARYDQFG (65 aa)) is the J domain. Residues 135–217 (GGEKEIRVTH…CGGAGRLRRP (83 aa)) form a CR-type zinc finger. Residues cysteine 148, cysteine 151, cysteine 165, cysteine 168, cysteine 191, cysteine 194, cysteine 205, and cysteine 208 each contribute to the Zn(2+) site. CXXCXGXG motif repeat units follow at residues 148–155 (CGTCQGSG), 165–172 (CTTCGGAG), 191–198 (CPTCEGSG), and 205–212 (CDDCGGAG).

It belongs to the DnaJ family. Homodimer. Zn(2+) serves as cofactor.

The protein localises to the cytoplasm. Its function is as follows. Participates actively in the response to hyperosmotic and heat shock by preventing the aggregation of stress-denatured proteins and by disaggregating proteins, also in an autonomous, DnaK-independent fashion. Unfolded proteins bind initially to DnaJ; upon interaction with the DnaJ-bound protein, DnaK hydrolyzes its bound ATP, resulting in the formation of a stable complex. GrpE releases ADP from DnaK; ATP binding to DnaK triggers the release of the substrate protein, thus completing the reaction cycle. Several rounds of ATP-dependent interactions between DnaJ, DnaK and GrpE are required for fully efficient folding. Also involved, together with DnaK and GrpE, in the DNA replication of plasmids through activation of initiation proteins. This chain is Chaperone protein DnaJ, found in Synechococcus sp. (strain ATCC 27144 / PCC 6301 / SAUG 1402/1) (Anacystis nidulans).